The following is a 387-amino-acid chain: 1-deoxy-D-xylulose 5-phosphate reductoisomerase (387 aa).

NADPH contacts are provided by T10, G11, I13, N38, and N122. 1-deoxy-D-xylulose 5-phosphate is bound at residue K123. E124 contacts NADPH. D148 contributes to the Mn(2+) binding site. 1-deoxy-D-xylulose 5-phosphate contacts are provided by S149, E150, S174, and H197. E150 is a Mn(2+) binding site. G203 is a binding site for NADPH. 1-deoxy-D-xylulose 5-phosphate-binding residues include S210, N215, K216, and E219. Position 219 (E219) interacts with Mn(2+).

It belongs to the DXR family. Mg(2+) serves as cofactor. The cofactor is Mn(2+).

It carries out the reaction 2-C-methyl-D-erythritol 4-phosphate + NADP(+) = 1-deoxy-D-xylulose 5-phosphate + NADPH + H(+). It functions in the pathway isoprenoid biosynthesis; isopentenyl diphosphate biosynthesis via DXP pathway; isopentenyl diphosphate from 1-deoxy-D-xylulose 5-phosphate: step 1/6. In terms of biological role, catalyzes the NADPH-dependent rearrangement and reduction of 1-deoxy-D-xylulose-5-phosphate (DXP) to 2-C-methyl-D-erythritol 4-phosphate (MEP). The chain is 1-deoxy-D-xylulose 5-phosphate reductoisomerase from Ehrlichia ruminantium (strain Gardel).